Reading from the N-terminus, the 641-residue chain is Soluble starch synthase 1, chloroplastic/amyloplastic (641 aa).

The N-terminal 113 residues, 1 to 113, are a transit peptide targeting the chloroplast; the sequence is MATAAGMGIG…DSIDKTIFVA (113 aa). The tract at residues 62–96 is disordered; sequence TFLVPTSTPPAPTQSPAPAPTPPPLPDSGVGEIEP. Over residues 68–87 the composition is skewed to pro residues; sequence STPPAPTQSPAPAPTPPPLP. Position 147 (Lys-147) interacts with ADP-alpha-D-glucose.

Belongs to the glycosyltransferase 1 family. Bacterial/plant glycogen synthase subfamily.

It is found in the plastid. It localises to the chloroplast. The protein resides in the amyloplast. The enzyme catalyses [(1-&gt;4)-alpha-D-glucosyl](n) + ADP-alpha-D-glucose = [(1-&gt;4)-alpha-D-glucosyl](n+1) + ADP + H(+). The protein operates within glycan biosynthesis; starch biosynthesis. The sequence is that of Soluble starch synthase 1, chloroplastic/amyloplastic from Oryza sativa subsp. indica (Rice).